Consider the following 254-residue polypeptide: 4-hydroxy-tetrahydrodipicolinate reductase (254 aa).

Residues 8–13, Asp35, 86–88, and 110–113 each bind NAD(+); these read GCSGKM, CST, and SANM. His143 acts as the Proton donor/acceptor in catalysis. His144 is a binding site for (S)-2,3,4,5-tetrahydrodipicolinate. Lys147 functions as the Proton donor in the catalytic mechanism. 153-154 contacts (S)-2,3,4,5-tetrahydrodipicolinate; sequence GT.

It belongs to the DapB family.

It localises to the cytoplasm. The catalysed reaction is (S)-2,3,4,5-tetrahydrodipicolinate + NAD(+) + H2O = (2S,4S)-4-hydroxy-2,3,4,5-tetrahydrodipicolinate + NADH + H(+). The enzyme catalyses (S)-2,3,4,5-tetrahydrodipicolinate + NADP(+) + H2O = (2S,4S)-4-hydroxy-2,3,4,5-tetrahydrodipicolinate + NADPH + H(+). It functions in the pathway amino-acid biosynthesis; L-lysine biosynthesis via DAP pathway; (S)-tetrahydrodipicolinate from L-aspartate: step 4/4. Its function is as follows. Catalyzes the conversion of 4-hydroxy-tetrahydrodipicolinate (HTPA) to tetrahydrodipicolinate. The polypeptide is 4-hydroxy-tetrahydrodipicolinate reductase (Clostridium perfringens (strain ATCC 13124 / DSM 756 / JCM 1290 / NCIMB 6125 / NCTC 8237 / Type A)).